The sequence spans 211 residues: Histone H1-beta, late embryonic (211 aa).

Disordered regions lie at residues 1 to 22 (MAAE…PSSS) and 81 to 211 (KGAS…AAKK). In terms of domain architecture, H15 spans 17 to 91 (AHPSSSEMVL…GASGSFKLGK (75 aa)). 2 stretches are compositionally biased toward basic and acidic residues: residues 95 to 107 (GKSD…DAAK) and 114 to 123 (KKKEAKEKKA). Basic residues-rich tracts occupy residues 124-177 (ARSK…KKAA) and 185-211 (KAAK…AAKK).

It belongs to the histone H1/H5 family.

It is found in the nucleus. It localises to the chromosome. Functionally, histones H1 are necessary for the condensation of nucleosome chains into higher-order structures. The protein is Histone H1-beta, late embryonic of Strongylocentrotus purpuratus (Purple sea urchin).